A 341-amino-acid chain; its full sequence is Methionine import ATP-binding protein MetN 2 (341 aa).

Residues 2–241 (IELKEVVKEY…PQHTVTKRFV (240 aa)) form the ABC transporter domain. 38 to 45 (GFSGAGKS) is a binding site for ATP.

Belongs to the ABC transporter superfamily. Methionine importer (TC 3.A.1.24) family. In terms of assembly, the complex is composed of two ATP-binding proteins (MetN), two transmembrane proteins (MetI) and a solute-binding protein (MetQ).

The protein resides in the cell membrane. The enzyme catalyses L-methionine(out) + ATP + H2O = L-methionine(in) + ADP + phosphate + H(+). It catalyses the reaction D-methionine(out) + ATP + H2O = D-methionine(in) + ADP + phosphate + H(+). Functionally, part of the ABC transporter complex MetNIQ involved in methionine import. Responsible for energy coupling to the transport system. The sequence is that of Methionine import ATP-binding protein MetN 2 from Staphylococcus aureus (strain N315).